Consider the following 233-residue polypeptide: UPF0758 protein TTE0897 (233 aa).

The MPN domain maps to 108-230 (SVTSPEDVIN…GISLKEKGYY (123 aa)). Positions 179, 181, and 192 each coordinate Zn(2+). The JAMM motif motif lies at 179–192 (HNHPSGDPTPSRED).

The protein belongs to the UPF0758 family.

The chain is UPF0758 protein TTE0897 from Caldanaerobacter subterraneus subsp. tengcongensis (strain DSM 15242 / JCM 11007 / NBRC 100824 / MB4) (Thermoanaerobacter tengcongensis).